A 429-amino-acid chain; its full sequence is MKVLVIGNGGREHALAWKAAQSPLVDTVFVAPGNAGTALEPALQNVAIGVTDIPALLSFAQHEKIDLTIVGPEAPLVIGVVDAFRAAGLKIFGPTEGAAQLEGSKAFTKDFLARHQIPTAEYQNFTEIEPALAYLREKGAPIVIKADGLAAGKGVIVAMTLEEAEAAVHDMLAGNAFGDAGHRIVIEEFLDGEEASFIVMVDGEHVLPMATSQDHKRVGNGDTGPNTGGMGAYSPAPVVTDEVHQRTMERIIWPTVKGMAAEGNTYTGFLYAGLMIDKQGNPKVIEFNCRFGDPETQPIMLRMKSDLVDLCLAACDGKLDEKTSEWDERASLGVVIAAGGYPGSYSTGDEIHGLPLEEVADGKVFHAGTKLADDDRVLTSGGRVLCATALGHTVAEAQKRAYALMTDIRWDGSFSRNDIGWRAIEREQN.

The ATP-grasp domain occupies 109–316 (KDFLARHQIP…LVDLCLAACD (208 aa)). Position 135 to 196 (135 to 196 (LREKGAPIVI…EEFLDGEEAS (62 aa))) interacts with ATP. Mg(2+)-binding residues include glutamate 286 and asparagine 288.

It belongs to the GARS family. In terms of assembly, monomer. Requires Mg(2+) as cofactor. Mn(2+) is required as a cofactor.

The enzyme catalyses 5-phospho-beta-D-ribosylamine + glycine + ATP = N(1)-(5-phospho-beta-D-ribosyl)glycinamide + ADP + phosphate + H(+). It functions in the pathway purine metabolism; IMP biosynthesis via de novo pathway; N(1)-(5-phospho-D-ribosyl)glycinamide from 5-phospho-alpha-D-ribose 1-diphosphate: step 2/2. In Salmonella typhimurium (strain LT2 / SGSC1412 / ATCC 700720), this protein is Phosphoribosylamine--glycine ligase.